Here is a 767-residue protein sequence, read N- to C-terminus: MYPQGRHPTPLQSGQPFKFSVLEICDRIKEEFQFLQAQYHSLKLECEKLASEKTEMQRHYVMAAPHQCPQGGTSYPHWPRLSPLQYYEMSYGLNIEMHKQAEIVKRLSAICAQMVPFLTQEHQQQVLQAVDRAKQVTVGELNSLLGQQNQLQPLSHAPPVPLTPRPAGLVGAGATGLLALSGALAAQAQLVAAVKEDRVGVDAEGSRVDRAASRSSSPSPPESLVEEDHPSSRGGSGKQQRAEDKDLSGPYDSEEDKSDYNLVVDEDQPSEPPSPVTTPCGKAPLCIPARRDLTDSPASLASSLGSPLPRSKDIALNDLPTGTPASRSCGTSPPQDSSTPGPSSASHLCQLAAQPAAPTDSIALRSPLTLSSPFTSSFSLGSHSTLNGDLSMPGSYVGLHLSPQVSSSVVYGRSPLQMAFESHPHLRGSSVSLPGIPVAKPAYSFHVSADGQMQPVPFPSDALVGTGIPRHARQLHTLAHGEVVCAVTISSSTQHVYTGGKGCVKVWDVGQPGSKTPVAQLDCLNRDNYIRSCKLLPDGQSLIVGGEASTLSIWDLAAPTPRIKAELTSSAPACYALAVSPDAKVCFSCCSDGNIVVWDLQNQAMVRQFQGHTDGASCIDISDYGTRLWTGGLDNTVRCWDLREGRQLQQHDFSSQIFSLGHCPNQDWLAVGMESSHVEVLHVRKPEKYQLRLHESCVLSLKFASCGRWFVSTGKDNLLNAWRTPYGASIFQSKESSSVLSCDISRNNKYIVTGSGDKKATVYEVVY.

Residues 1-152 (MYPQGRHPTP…SLLGQQNQLQ (152 aa)) are q domain. Residues 153–215 (PLSHAPPVPL…SRVDRAASRS (63 aa)) form a GP domain region. A compositionally biased stretch (basic and acidic residues) spans 198-212 (RVGVDAEGSRVDRAA). Disordered stretches follow at residues 198–257 (RVGV…EEDK), 264–283 (VDED…CGKA), and 296–346 (SPAS…SSAS). The interval 216–279 (SSPSPPESLV…SEPPSPVTTP (64 aa)) is ccN domain. The Nuclear localization signal signature appears at 238–242 (KQQRA). Position 253 is a phosphoserine; by CK2 (Ser-253). Phosphoserine; by CDK1 is present on Ser-274. Thr-278 bears the Phosphothreonine; by CDK1 mark. Positions 280 to 447 (CGKAPLCIPA…VAKPAYSFHV (168 aa)) are SP domain. Low complexity predominate over residues 296–309 (SPASLASSLGSPLP). Residue Ser-306 is modified to Phosphoserine. The span at 323–346 (TPASRSCGTSPPQDSSTPGPSSAS) shows a compositional bias: polar residues. WD repeat units follow at residues 479-517 (AHGE…SKTP), 525-564 (NRDN…PRIK), 569-608 (SSAP…MVRQ), 611-650 (GHTD…QLQQ), 693-732 (LHES…SIFQ), and 734-766 (KESS…YEVV).

Belongs to the WD repeat Groucho/TLE family. In terms of assembly, homooligomer and heterooligomer with other family members. Binds LEF1, TCF7, TCF7L1, TCF7L2, UTY, HES1 and HES5. Post-translationally, ubiquitinated by XIAP/BIRC4. Expressed in bone marrow-derived macrophages.

Its subcellular location is the nucleus. Transcriptional corepressor that binds to a number of transcription factors. Inhibits the transcriptional activation mediated by CTNNB1 and TCF family members in Wnt signaling. The effects of full-length TLE family members may be modulated by association with dominant-negative AES. In Mus musculus (Mouse), this protein is Transducin-like enhancer protein 2 (Tle2).